A 271-amino-acid chain; its full sequence is Thiazole synthase (271 aa).

K95 acts as the Schiff-base intermediate with DXP in catalysis. Residues G156, 182–183, and 204–205 each bind 1-deoxy-D-xylulose 5-phosphate; these read AG and NT.

This sequence belongs to the ThiG family. In terms of assembly, homotetramer. Forms heterodimers with either ThiH or ThiS.

The protein localises to the cytoplasm. It carries out the reaction [ThiS sulfur-carrier protein]-C-terminal-Gly-aminoethanethioate + 2-iminoacetate + 1-deoxy-D-xylulose 5-phosphate = [ThiS sulfur-carrier protein]-C-terminal Gly-Gly + 2-[(2R,5Z)-2-carboxy-4-methylthiazol-5(2H)-ylidene]ethyl phosphate + 2 H2O + H(+). It functions in the pathway cofactor biosynthesis; thiamine diphosphate biosynthesis. Its function is as follows. Catalyzes the rearrangement of 1-deoxy-D-xylulose 5-phosphate (DXP) to produce the thiazole phosphate moiety of thiamine. Sulfur is provided by the thiocarboxylate moiety of the carrier protein ThiS. In vitro, sulfur can be provided by H(2)S. The chain is Thiazole synthase from Yersinia pestis.